Reading from the N-terminus, the 298-residue chain is GTPase Era (298 aa).

The Era-type G domain occupies 4–171 (KSGFVSIVGR…VEGIFELLPE (168 aa)). The tract at residues 12 to 19 (GRPNVGKS) is G1. Position 12 to 19 (12 to 19 (GRPNVGKS)) interacts with GTP. The tract at residues 38-42 (QTTRN) is G2. Residues 59–62 (DTPG) form a G3 region. GTP is bound by residues 59–63 (DTPGV) and 121–124 (NKID). Residues 121–124 (NKID) form a G4 region. Residues 150–152 (ISA) form a G5 region. Residues 202 to 280 (TREEIPHSVA…YLDLWVKVKE (79 aa)) enclose the KH type-2 domain.

It belongs to the TRAFAC class TrmE-Era-EngA-EngB-Septin-like GTPase superfamily. Era GTPase family. Monomer.

The protein localises to the cytoplasm. The protein resides in the cell membrane. An essential GTPase that binds both GDP and GTP, with rapid nucleotide exchange. Plays a role in 16S rRNA processing and 30S ribosomal subunit biogenesis and possibly also in cell cycle regulation and energy metabolism. This Carboxydothermus hydrogenoformans (strain ATCC BAA-161 / DSM 6008 / Z-2901) protein is GTPase Era.